Consider the following 419-residue polypeptide: 2-amino-3-ketobutyrate coenzyme A ligase, mitochondrial (419 aa).

Residues 1–21 (MWAGRVLHAALSRAPRESRAQ) constitute a mitochondrion transit peptide. K45 bears the N6-acetyllysine; alternate mark. K45 bears the N6-succinyllysine; alternate mark. Residue 134–135 (CF) coordinates pyridoxal 5'-phosphate. A substrate-binding site is contributed by H159. At K187 the chain carries N6-acetyllysine; alternate. Position 187 is an N6-succinyllysine; alternate (K187). Pyridoxal 5'-phosphate is bound by residues S206, 231–234 (DESH), 262–265 (TLGK), and 295–296 (SN). K265 is subject to N6-(pyridoxal phosphate)lysine. K326 and K368 each carry N6-succinyllysine. K383 bears the N6-acetyllysine; alternate mark. An N6-succinyllysine; alternate modification is found at K383. R389 is a substrate binding site.

The protein belongs to the class-II pyridoxal-phosphate-dependent aminotransferase family. Pyridoxal 5'-phosphate serves as cofactor.

It is found in the mitochondrion. The protein localises to the nucleus. The catalysed reaction is glycine + acetyl-CoA = (2S)-2-amino-3-oxobutanoate + CoA. It functions in the pathway amino-acid degradation; L-threonine degradation via oxydo-reductase pathway; glycine from L-threonine: step 2/2. Its function is as follows. Pyridoxal phosphate (PLP) dependent enzyme, which catalyzes the cleavage of 2-amino-3-oxobutanoate to glycine and acetyl-CoA. Catalyzes the second reaction step on the main metabolic degradation pathway for L-threonine. In Bos taurus (Bovine), this protein is 2-amino-3-ketobutyrate coenzyme A ligase, mitochondrial (GCAT).